The chain runs to 238 residues: Ribonuclease 3 (238 aa).

The region spanning 10–139 (FKQFQEQTGI…FIGALYLDQG (130 aa)) is the RNase III domain. Position 52 (Glu-52) interacts with Mg(2+). The active site involves Asp-56. Residues Asp-125 and Glu-128 each coordinate Mg(2+). Residue Glu-128 is part of the active site. Positions 165–234 (DYKSQLQEFV…AQMALAKLKQ (70 aa)) constitute a DRBM domain.

It belongs to the ribonuclease III family. As to quaternary structure, homodimer. Mg(2+) is required as a cofactor.

The protein localises to the cytoplasm. The enzyme catalyses Endonucleolytic cleavage to 5'-phosphomonoester.. Functionally, digests double-stranded RNA. Involved in the processing of primary rRNA transcript to yield the immediate precursors to the large and small rRNAs (23S and 16S). Processes some mRNAs, and tRNAs when they are encoded in the rRNA operon. Processes pre-crRNA and tracrRNA of type II CRISPR loci if present in the organism. This is Ribonuclease 3 from Anoxybacillus flavithermus (strain DSM 21510 / WK1).